The sequence spans 699 residues: Elongation factor G 1 (699 aa).

A tr-type G domain is found at 8-290 (ERYRNIGICA…AVIEYLPSPT (283 aa)). GTP contacts are provided by residues 17-24 (AHVDAGKT), 88-92 (DTPGH), and 142-145 (NKMD).

It belongs to the TRAFAC class translation factor GTPase superfamily. Classic translation factor GTPase family. EF-G/EF-2 subfamily.

Its subcellular location is the cytoplasm. In terms of biological role, catalyzes the GTP-dependent ribosomal translocation step during translation elongation. During this step, the ribosome changes from the pre-translocational (PRE) to the post-translocational (POST) state as the newly formed A-site-bound peptidyl-tRNA and P-site-bound deacylated tRNA move to the P and E sites, respectively. Catalyzes the coordinated movement of the two tRNA molecules, the mRNA and conformational changes in the ribosome. The protein is Elongation factor G 1 of Hahella chejuensis (strain KCTC 2396).